A 310-amino-acid chain; its full sequence is MSKASMLFSITVPGSTANLGPGFDSVGMALSRYLKLSVFDHDSWLFEAESDVVSGIPPGTDNLIYQTAKKVADHFGKTLPPVYVKVWSDIPLARGLGSSAAAIVAAIELANQLLELNMTDDQKLFFASEVEGHPDNAGASLFGGLLIGLHEEDKTHAVKVKHVDIDVVVVIPFYEVLTKDARDVLPEDFSYKHAVSASAVSNVLVAALMTQNWPLVGEMMNKDLFHQPYRTMLVPELSKVEHVASLKGAYGTALSGAGPTILTLIEKGKGEGLKKQLAQNFPHCEVDLLTVPVEGVVVEHDPVNQVKNVL.

An ATP-binding site is contributed by 91-101; sequence PLARGLGSSAA.

It belongs to the GHMP kinase family. Homoserine kinase subfamily.

Its subcellular location is the cytoplasm. It carries out the reaction L-homoserine + ATP = O-phospho-L-homoserine + ADP + H(+). It participates in amino-acid biosynthesis; L-threonine biosynthesis; L-threonine from L-aspartate: step 4/5. Functionally, catalyzes the ATP-dependent phosphorylation of L-homoserine to L-homoserine phosphate. The protein is Homoserine kinase of Bacillus pumilus (strain SAFR-032).